Reading from the N-terminus, the 396-residue chain is Ribosomal RNA large subunit methyltransferase I (396 aa).

A PUA domain is found at 2-79 (AIRIKLKPGR…REEEIDREFF (78 aa)).

The protein belongs to the methyltransferase superfamily. RlmI family.

Its subcellular location is the cytoplasm. The catalysed reaction is cytidine(1962) in 23S rRNA + S-adenosyl-L-methionine = 5-methylcytidine(1962) in 23S rRNA + S-adenosyl-L-homocysteine + H(+). In terms of biological role, specifically methylates the cytosine at position 1962 (m5C1962) of 23S rRNA. This Shewanella oneidensis (strain ATCC 700550 / JCM 31522 / CIP 106686 / LMG 19005 / NCIMB 14063 / MR-1) protein is Ribosomal RNA large subunit methyltransferase I.